The primary structure comprises 790 residues: Penicillin-binding protein 1A (790 aa).

Topologically, residues 1 to 6 (MYKSLF) are cytoplasmic. Residues 7–27 (FCLKIFAVLILVGCGITAYII) form a helical; Signal-anchor for type II membrane protein membrane-spanning segment. Residues 28 to 790 (YHYSRDLPDY…SKEDQSQEIY (763 aa)) are Periplasmic-facing. The tract at residues 49-220 (TRIYSHDGKL…SELNPERNYA (172 aa)) is transglycosylase. The active-site Proton donor; for transglycosylase activity is the Glu-87. The segment at 398–711 (DVIVVEPIKD…SNVVLPIFID (314 aa)) is transpeptidase. Catalysis depends on Ser-457, which acts as the Acyl-ester intermediate; for transpeptidase activity.

In the N-terminal section; belongs to the glycosyltransferase 51 family. It in the C-terminal section; belongs to the transpeptidase family.

Its subcellular location is the cell inner membrane. It catalyses the reaction [GlcNAc-(1-&gt;4)-Mur2Ac(oyl-L-Ala-gamma-D-Glu-L-Lys-D-Ala-D-Ala)](n)-di-trans,octa-cis-undecaprenyl diphosphate + beta-D-GlcNAc-(1-&gt;4)-Mur2Ac(oyl-L-Ala-gamma-D-Glu-L-Lys-D-Ala-D-Ala)-di-trans,octa-cis-undecaprenyl diphosphate = [GlcNAc-(1-&gt;4)-Mur2Ac(oyl-L-Ala-gamma-D-Glu-L-Lys-D-Ala-D-Ala)](n+1)-di-trans,octa-cis-undecaprenyl diphosphate + di-trans,octa-cis-undecaprenyl diphosphate + H(+). The enzyme catalyses Preferential cleavage: (Ac)2-L-Lys-D-Ala-|-D-Ala. Also transpeptidation of peptidyl-alanyl moieties that are N-acyl substituents of D-alanine.. It functions in the pathway cell wall biogenesis; peptidoglycan biosynthesis. Its function is as follows. Cell wall formation. Synthesis of cross-linked peptidoglycan from the lipid intermediates. The enzyme has a penicillin-insensitive transglycosylase N-terminal domain (formation of linear glycan strands) and a penicillin-sensitive transpeptidase C-terminal domain (cross-linking of the peptide subunits). This Rickettsia felis (strain ATCC VR-1525 / URRWXCal2) (Rickettsia azadi) protein is Penicillin-binding protein 1A (mrcA).